We begin with the raw amino-acid sequence, 50 residues long: Omwaprin-a (50 aa).

The WAP domain occupies 3-47 (RPKKPGLCPPRPQKPCVKECKNDDSCPGQQKCCNYGCKDECRDPI). 4 cysteine pairs are disulfide-bonded: cysteine 10/cysteine 35, cysteine 18/cysteine 39, cysteine 22/cysteine 34, and cysteine 28/cysteine 43.

The protein belongs to the venom waprin family. In terms of tissue distribution, expressed by the venom gland.

Its subcellular location is the secreted. In terms of biological role, damages membranes of susceptible bacteria. Has antibacterial activity against the Gram-positive bacteria B.megaterium and S.warneri. After a 45-minute treatment with this protein, B.megaterium have no visible pili and are smooth. Has no antibacterial activity against the Gram-positive bacteria B.thuringiensis, S.aureus, S.clavuligerus and B.anthracis, or the Gram-negative bacteria E.coli and A.tumefaciens. Has no hemolytic activity. Does not inhibit the proteinases elastase and cathepsin G. Is not toxic to mice. The protein is Omwaprin-a of Oxyuranus microlepidotus (Inland taipan).